A 921-amino-acid chain; its full sequence is Collagen alpha-1(IX) chain (921 aa).

The first 23 residues, 1 to 23 (MKNFWKISVFFCVCSCLGPWVSA), serve as a signal peptide directing secretion. The nonhelical region (NC4) stretch occupies residues 24 to 268 (TLKRRARFPA…ITTSQTTDER (245 aa)). 2 disulfides stabilise this stretch: C44–C242 and C198–C252. The Laminin G-like domain occupies 50–244 (GQDDLPGFDL…LQWMLIHCDP (195 aa)). Residues D213, D215, and H253 each contribute to the Zn(2+) site. Disordered regions lie at residues 253-759 (HELP…APTD) and 783-921 (RPDT…GPDK). Collagen-like domains lie at 269–325 (GPPG…PGAD), 326–356 (GLTG…GFPG), 358–403 (GIPG…GTIG), 416–472 (PPGR…GLRG), 473–512 (ITGI…PPGE), 604–656 (GKPG…LPGP), 657–711 (PGLP…PGEP), and 712–755 (GLRG…PPGR). Residues 269 to 405 (GPPGEQGPPG…PGPSGTIGFH (137 aa)) form a triple-helical region (COL3) region. Pro residues-rich tracts occupy residues 273 to 285 (EQGP…PPGV) and 298 to 310 (KGPP…PGDP). The span at 368–383 (TTGLPGELGRVGPIGD) shows a compositional bias: low complexity. The span at 387–398 (RGPPGPPGPPGP) shows a compositional bias: pro residues. The interval 406-417 (DGDPLCPNSCPP) is nonhelical region (NC3). Residues 418 to 756 (GRSGYPGLPG…PGIQGPPGRA (339 aa)) form a triple-helical region (COL2) region. The segment covering 479–489 (DKGEKGARGFD) has biased composition (basic and acidic residues). 2 stretches are compositionally biased toward low complexity: residues 594–632 (PGKP…PVGP) and 639–650 (PGKLGSVGSPGL). The nonhelical region (NC2) stretch occupies residues 757 to 786 (PTDQHIKQVCMRVVQEHFVEMAASLKRPDT). A triple-helical region (COL1) region spans residues 787–901 (GASGLPGRPG…PGPPGPPGFC (115 aa)). The Collagen-like 9 domain maps to 790–847 (GLPGRPGPPGPPGPPGENGFPGQMGIRGLPGIKGPPGALGLRGPKGDLGEKGERGPPG). Pro residues predominate over residues 794-804 (RPGPPGPPGPP). Residues 833–845 (PKGDLGEKGERGP) are compositionally biased toward basic and acidic residues. Positions 888 to 900 (VPGPPGPPGPPGF) are enriched in pro residues. The nonhelical region (NC1) stretch occupies residues 902–921 (EPASCTLQSGQRAFSKGPDK).

It belongs to the fibril-associated collagens with interrupted helices (FACIT) family. In terms of assembly, heterotrimer of an alpha 1(IX), an alpha 2(IX) and an alpha 3(IX) chain. Post-translationally, covalently linked to the telopeptides of type II collagen by lysine-derived cross-links. Prolines at the third position of the tripeptide repeating unit (G-X-Y) are hydroxylated in some or all of the chains.

Its subcellular location is the secreted. It localises to the extracellular space. It is found in the extracellular matrix. Functionally, structural component of hyaline cartilage and vitreous of the eye. The protein is Collagen alpha-1(IX) chain (Col9a1) of Mus musculus (Mouse).